We begin with the raw amino-acid sequence, 310 residues long: Olfactory receptor 9A2 (310 aa).

Over 1 to 24 the chain is Extracellular; that stretch reads MMDNHSSATEFHLLGFPGSQGLHH. The N-linked (GlcNAc...) asparagine glycan is linked to asparagine 4. The helical transmembrane segment at 25–45 threads the bilayer; that stretch reads ILFAIFFFFYLVTLMGNTVII. Residues 46-53 lie on the Cytoplasmic side of the membrane; it reads VIVCVDKR. The chain crosses the membrane as a helical span at residues 54-74; sequence LQSPMYFFLSHLSTLEILVTT. Residues 75–98 lie on the Extracellular side of the membrane; sequence IIVPMMLWGLLFLGCRQYLSLHVS. At 117–135 the chain is on the cytoplasmic side; that stretch reads DRYVAVCNPLRYNIIMNSS. Residues 136–156 form a helical membrane-spanning segment; sequence TCIWVVIVSWVFGFLSEIWPI. The Extracellular segment spans residues 157–193; it reads YATFQFTFRKSNSLDHFYCDRGQLLKLSCDNTLLTEF. The helical transmembrane segment at 194-213 threads the bilayer; it reads ILFLMAVFILIGSLIPTIVS. Residues 214–233 lie on the Cytoplasmic side of the membrane; sequence YTYIISTILKIPSASGRRKA. Residues 234–254 form a helical membrane-spanning segment; sequence FSTFASHFTCVVIGYGSCLFL. Over 255–267 the chain is Extracellular; sequence YVKPKQTQGVEYN. Residues 268–288 traverse the membrane as a helical segment; the sequence is KIVSLLVSVLTPFLNPFIFTL. Residues 289–310 are Cytoplasmic-facing; the sequence is RNDKVKEALRDGMKRCCQLLKD.

This sequence belongs to the G-protein coupled receptor 1 family.

It is found in the cell membrane. Odorant receptor. In Homo sapiens (Human), this protein is Olfactory receptor 9A2 (OR9A2).